Consider the following 195-residue polypeptide: PRS fimbrial minor pilin protein (195 aa).

The N-terminal stretch at 1-22 is a signal peptide; that stretch reads MRLRFSVPLFFFGCVFVHGVFA. Cysteine 58 and cysteine 97 are disulfide-bonded.

The protein belongs to the fimbrial protein family.

It is found in the secreted. Its subcellular location is the fimbrium. Its function is as follows. Fimbriae (also called pili), polar filaments radiating from the surface of the bacterium to a length of 0.5-1.5 micrometers and numbering 100-300 per cell, enable bacteria to colonize the epithelium of specific host organs. Functionally, seems to anchor the pilus to the bacterial cell. In addition the stoichiometric relationship between PrsH and PrsA determines the pilus length. This chain is PRS fimbrial minor pilin protein (prsH), found in Escherichia coli.